A 412-amino-acid chain; its full sequence is Peptidase T (412 aa).

Residue His83 coordinates Zn(2+). Residue Asp85 is part of the active site. Zn(2+) is bound at residue Asp145. Glu179 serves as the catalytic Proton acceptor. The Zn(2+) site is built by Glu180, Asp202, and His384.

Belongs to the peptidase M20B family. Requires Zn(2+) as cofactor.

Its subcellular location is the cytoplasm. The enzyme catalyses Release of the N-terminal residue from a tripeptide.. In terms of biological role, cleaves the N-terminal amino acid of tripeptides. This Fusobacterium nucleatum subsp. nucleatum (strain ATCC 25586 / DSM 15643 / BCRC 10681 / CIP 101130 / JCM 8532 / KCTC 2640 / LMG 13131 / VPI 4355) protein is Peptidase T.